A 143-amino-acid polypeptide reads, in one-letter code: Spore coat protein P (143 aa).

Positions 34–143 constitute a sHSP domain; it reads FFDSEASTFV…VETVAFNKGL (110 aa).

Belongs to the small heat shock protein (HSP20) family.

The chain is Spore coat protein P (cotP) from Bacillus subtilis (strain 168).